Reading from the N-terminus, the 494-residue chain is MVKEIDINKLLAQENNALNAILSHVNELCKQNKQLQGLIEIQNETKELEKEHNRSLPWFKRFVKTVSNVKYILIKSEEQLTNEAIKYNNKILKDIDNKIYNIAEKSAPLKQALQEEIEKSFKDLTKKDLSKDQRARLSEVFFSYKSKPERFSALHMTNPLQFINAEALEKQFNSLNATKQNIQNLISENSNIKELKEIQKQVAEIRAEVPHTFFEKLNNIWQNVKNVFVNNSEQVLAKNKESNTRTIRKIDEQLYKTQHKFEELIENKERNIKDIIAKLPDNEELQKIVSNLTNHMASKKEPILANVSLAKPLENNIPPPPPPPPPLPDNNIPPPPPPPPPLPDNNIPPPPPPPPMAPVKTLSKAVEATTVKKLENQPRPSIDTSDLMREIAGPKKLKKVEFDPNTGKPVAHSHSKPAQNVNKPSGLESIFARRVAIEMSDSSSSESDSGNWSDVSVNRNKSKMLKTKGERDAKMTTHAQKINNRNSQKPSFVR.

The segment at 312–494 (PLENNIPPPP…RNSQKPSFVR (183 aa)) is disordered. A compositionally biased stretch (pro residues) spans 317–357 (IPPPPPPPPPLPDNNIPPPPPPPPPLPDNNIPPPPPPPPMA). A WH2 domain is found at 383-400 (DTSDLMREIAGPKKLKKV). A central and acidic domains region spans residues 421 to 454 (VNKPSGLESIFARRVAIEMSDSSSSESDSGNWSD). Positions 440–456 (SDSSSSESDSGNWSDVS) are enriched in low complexity. Positions 477-494 (THAQKINNRNSQKPSFVR) are enriched in polar residues.

It localises to the cell surface. Its function is as follows. Recruits and activates the Arp2/3 complex, which in turn leads to actin polymerization, promoting Rickettsia motility during infection. In Rickettsia rickettsii, this protein is Arp2/3 complex-activating protein rickA (rickA).